A 146-amino-acid chain; its full sequence is NADH-quinone oxidoreductase subunit A (146 aa).

Transmembrane regions (helical) follow at residues 4 to 24, 63 to 83, and 91 to 111; these read IYHW…VFML, LIAM…AWAI, and IGFS…IYLI.

The protein belongs to the complex I subunit 3 family. NDH-1 is composed of 13 different subunits. Subunits NuoA, H, J, K, L, M, N constitute the membrane sector of the complex.

The protein localises to the cell inner membrane. The enzyme catalyses a quinone + NADH + 5 H(+)(in) = a quinol + NAD(+) + 4 H(+)(out). In terms of biological role, NDH-1 shuttles electrons from NADH, via FMN and iron-sulfur (Fe-S) centers, to quinones in the respiratory chain. The immediate electron acceptor for the enzyme in this species is believed to be ubiquinone. Couples the redox reaction to proton translocation (for every two electrons transferred, four hydrogen ions are translocated across the cytoplasmic membrane), and thus conserves the redox energy in a proton gradient. This Blochmanniella pennsylvanica (strain BPEN) protein is NADH-quinone oxidoreductase subunit A.